The chain runs to 890 residues: DNA mismatch repair protein MutS (890 aa).

Basic and acidic residues predominate over residues 1 to 13 (MDKGINLQNDKEP). Residues 1–23 (MDKGINLQNDKEPSPMAEGNPAD) are disordered. 649 to 656 (GPNMGGKS) contacts ATP.

Belongs to the DNA mismatch repair MutS family.

This protein is involved in the repair of mismatches in DNA. It is possible that it carries out the mismatch recognition step. This protein has a weak ATPase activity. In Paracidovorax citrulli (strain AAC00-1) (Acidovorax citrulli), this protein is DNA mismatch repair protein MutS.